We begin with the raw amino-acid sequence, 740 residues long: 1,4-alpha-glucan branching enzyme GlgB (740 aa).

Asp409 acts as the Nucleophile in catalysis. Residue Glu462 is the Proton donor of the active site.

The protein belongs to the glycosyl hydrolase 13 family. GlgB subfamily. In terms of assembly, monomer.

It carries out the reaction Transfers a segment of a (1-&gt;4)-alpha-D-glucan chain to a primary hydroxy group in a similar glucan chain.. Its pathway is glycan biosynthesis; glycogen biosynthesis. Its function is as follows. Catalyzes the formation of the alpha-1,6-glucosidic linkages in glycogen by scission of a 1,4-alpha-linked oligosaccharide from growing alpha-1,4-glucan chains and the subsequent attachment of the oligosaccharide to the alpha-1,6 position. The sequence is that of 1,4-alpha-glucan branching enzyme GlgB from Methylococcus capsulatus (strain ATCC 33009 / NCIMB 11132 / Bath).